The following is a 289-amino-acid chain: Diacylglycerol pyrophosphate phosphatase 1 (289 aa).

The Vacuolar segment spans residues 1–21 (MNRVSFIKTPFNIGAKWRLED). The helical transmembrane segment at 22-42 (VFLLIIMILLNYPVYYQQPFE) threads the bilayer. Residues 43-65 (RQFYINDLTISHPYATTERVNNN) are Cytoplasmic-facing. Residues 66–86 (MLFVYSFVVPSLTILIIGSIL) form a helical membrane-spanning segment. Over 87-92 (ADRRHL) the chain is Vacuolar. Residues 93-113 (IFILYTSLLGLSLAWFSTSFF) traverse the membrane as a helical segment. The Cytoplasmic segment spans residues 114 to 172 (TNFIKNWIGRLRPDFLDRCQPVEGLPLDTLFTAKDVCTTKNHERLLDGFRTTPSGHSSE). The tract at residues 118-126 (KNWIGRLRP) is phosphatase sequence motif I. The segment at 166-169 (PSGH) is phosphatase sequence motif II. Helical transmembrane passes span 173–193 (SFAGLGYLYFWLCGQLLTESP) and 194–214 (LMPLWRKMVAFLPLLGAALIA). The Cytoplasmic portion of the chain corresponds to 215-222 (LSRTQDYR). The interval 216-227 (SRTQDYRHHFVD) is phosphatase sequence motif III. Residues 223–243 (HHFVDVILGSMLGYIMAHFFY) traverse the membrane as a helical segment. At 244–289 (RRIFPPIDDPLPFKPLMDDSDVTLEEAVTHQRIPDEELHPLSDEGM) the chain is on the vacuolar side. Ser285 carries the phosphoserine modification.

This sequence belongs to the PA-phosphatase related phosphoesterase family.

It localises to the vacuole membrane. It carries out the reaction a 1,2-diacyl-sn-glycerol 3-diphosphate + H2O = a 1,2-diacyl-sn-glycero-3-phosphate + phosphate + H(+). The enzyme catalyses a 1,2-diacyl-sn-glycero-3-phosphate + H2O = a 1,2-diacyl-sn-glycerol + phosphate. It catalyses the reaction a 1-acyl-sn-glycero-3-phosphate + H2O = a 1-acyl-sn-glycerol + phosphate. Inhibited by sodium fluoride (NaF) and pyrophosphate. Strongly inhibited by manganese ion and, to a lower extent, by magnesium and calcium ions. Also inhibited by Cu(2+) ion. In an indirect manner, it is also inhibited by the zinc ion which is able to form a complex with DGPP and prevent the enzyme from removing the phosphate from the substrate. Not inhibited by N-ethylmaleimide. Functionally, catalyzes the dephosphorylation of diacylglycerol diphosphate (DGPP) to phosphatidate (PA) and the subsequent dephosphorylation of PA to diacylglycerol (DAG). Together with LPP1, regulates intracellular DGPP and PA levels, which are phospholipid molecules believed to play a signaling role in stress response. Can also use lysophosphatidic acid (LPA) and phosphatidylglycerophosphate as substrates. Substrate preference is DGPP &gt; LPA &gt; PA. Activity is independent of a divalent cation ion and insensitive to inhibition by N-ethylmaleimide. This is Diacylglycerol pyrophosphate phosphatase 1 (DPP1) from Saccharomyces cerevisiae (strain ATCC 204508 / S288c) (Baker's yeast).